The sequence spans 241 residues: Enolase-phosphatase E1 (241 aa).

Mg(2+)-binding residues include Asp9 and Glu11. Substrate contacts are provided by residues Ser133–Ser134 and Lys172. Asp198 serves as a coordination point for Mg(2+).

Belongs to the HAD-like hydrolase superfamily. MasA/MtnC family. Monomer. Mg(2+) serves as cofactor.

It localises to the cytoplasm. The protein localises to the nucleus. It carries out the reaction 5-methylsulfanyl-2,3-dioxopentyl phosphate + H2O = 1,2-dihydroxy-5-(methylsulfanyl)pent-1-en-3-one + phosphate. The protein operates within amino-acid biosynthesis; L-methionine biosynthesis via salvage pathway; L-methionine from S-methyl-5-thio-alpha-D-ribose 1-phosphate: step 3/6. It functions in the pathway amino-acid biosynthesis; L-methionine biosynthesis via salvage pathway; L-methionine from S-methyl-5-thio-alpha-D-ribose 1-phosphate: step 4/6. Bifunctional enzyme that catalyzes the enolization of 2,3-diketo-5-methylthiopentyl-1-phosphate (DK-MTP-1-P) into the intermediate 2-hydroxy-3-keto-5-methylthiopentenyl-1-phosphate (HK-MTPenyl-1-P), which is then dephosphorylated to form the acireductone 1,2-dihydroxy-3-keto-5-methylthiopentene (DHK-MTPene). The polypeptide is Enolase-phosphatase E1 (Scheffersomyces stipitis (strain ATCC 58785 / CBS 6054 / NBRC 10063 / NRRL Y-11545) (Yeast)).